We begin with the raw amino-acid sequence, 157 residues long: Large ribosomal subunit protein uL13m (157 aa).

Residues 1-29 constitute a mitochondrion transit peptide; sequence MSTLNGQTALAYAKVWHHVSAKNVPLGRL.

It belongs to the universal ribosomal protein uL13 family. In terms of assembly, component of the mitochondrial large ribosomal subunit (mt-LSU). Mature yeast 74S mitochondrial ribosomes consist of a small (37S) and a large (54S) subunit. The 37S small subunit contains a 15S ribosomal RNA (15S mt-rRNA) and at least 32 different proteins. The 54S large subunit contains a 21S rRNA (21S mt-rRNA) and at least 45 different proteins.

The protein localises to the mitochondrion. Its function is as follows. Component of the mitochondrial ribosome (mitoribosome), a dedicated translation machinery responsible for the synthesis of mitochondrial genome-encoded proteins, including at least some of the essential transmembrane subunits of the mitochondrial respiratory chain. The mitoribosomes are attached to the mitochondrial inner membrane and translation products are cotranslationally integrated into the membrane. In Schizosaccharomyces pombe (strain 972 / ATCC 24843) (Fission yeast), this protein is Large ribosomal subunit protein uL13m.